A 91-amino-acid chain; its full sequence is Probable Fe(2+)-trafficking protein (91 aa).

It belongs to the Fe(2+)-trafficking protein family. As to quaternary structure, monomer.

Its function is as follows. Could be a mediator in iron transactions between iron acquisition and iron-requiring processes, such as synthesis and/or repair of Fe-S clusters in biosynthetic enzymes. This Klebsiella pneumoniae subsp. pneumoniae (strain ATCC 700721 / MGH 78578) protein is Probable Fe(2+)-trafficking protein.